An 892-amino-acid chain; its full sequence is Translation initiation factor IF-2 (892 aa).

The tract at residues 65–296 (KTRSTLNIPS…KGKRKPSTLQ (232 aa)) is disordered. The segment covering 68 to 82 (STLNIPSTGGKSKSV) has biased composition (polar residues). Positions 99-217 (EQAKAEEQAQ…KMAAENEGKW (119 aa)) are enriched in basic and acidic residues. Positions 224–237 (QTESADYHVTTSQH) are enriched in polar residues. A compositionally biased stretch (basic and acidic residues) spans 239-254 (RAAEDENDAKVEGDRR). Over residues 255 to 269 (SRTRGGKATKQKKGN) the composition is skewed to basic residues. Over residues 270-283 (KLSESKADREEARA) the composition is skewed to basic and acidic residues. The tr-type G domain maps to 391–560 (HRAPVVTIMG…LLQAEVLELK (170 aa)). A G1 region spans residues 400 to 407 (GHVDHGKT). Residue 400 to 407 (GHVDHGKT) participates in GTP binding. The tract at residues 425 to 429 (GITQH) is G2. Residues 446–449 (DTPG) form a G3 region. GTP contacts are provided by residues 446–450 (DTPGH) and 500–503 (NKID). A G4 region spans residues 500-503 (NKID). A G5 region spans residues 536–538 (SAK).

The protein belongs to the TRAFAC class translation factor GTPase superfamily. Classic translation factor GTPase family. IF-2 subfamily.

It localises to the cytoplasm. One of the essential components for the initiation of protein synthesis. Protects formylmethionyl-tRNA from spontaneous hydrolysis and promotes its binding to the 30S ribosomal subunits. Also involved in the hydrolysis of GTP during the formation of the 70S ribosomal complex. The polypeptide is Translation initiation factor IF-2 (Yersinia pseudotuberculosis serotype O:1b (strain IP 31758)).